Here is a 1465-residue protein sequence, read N- to C-terminus: MSELFKKLMDQIEMPLEMKNSRVFSSADIVEVKVYPESRIWDFRFSFETILPIDFYQELRSRLVTSFETADIKAVFDIEVENAEFSNELLQAYYQEAFKQPTCNSASFKSSFSHLTVSYTDGKVLISAPQFVNNDHFRKNHLPNLEKQFEAFGFGKLSFDIVSNQKMTEEIKHHFESSRQQQIQKASQETLEIQKSLEASIPPEEIPKPVSNFKERIKDRQAAFEKAEITPMAEIETEENRITFEGLVFDVERKTTRTGRHIINFKMTDYTSSFPMQKWAKDDEELKKYDMISKGAWLRVRGNIENNPFTKALTMNVQNVKTIVHKERKDLMPQGEKRVEFHAHTNMSTMDALPTVEQLVAKAAQFGHPAVAITDHGNVQSFPHGYHAGKKNGIKVLFGLEANLVEDRVPIVYNEVDMDMNEATYVVFDVETTGLSAINNDLIQIAASKMHKGNIVEQFDEFIDPGHPLSQFTTDLTGITDQHVKGAKPISQVLQEFQSFCQDTVLVAHNATFDVGFMNANYERHDLPKITQPVIDTLEFARNLYPEYKRHGLGPLTKRFQVSLEHHHMANYDAEATGRLLFIFLKEAKEKHGVNNLLDLNTKIVDDNSYKKARVKHATIYVLNQKGLKNLFKLVSLSNVTYFAGVARIPRTILDQYRDGLLLGTACSDGEVFDTVLSKGVEDAVEVAKYYDFIEVMPPALYEPLLARELIKDEAGIQQIIKDLIEVGRRLDKPVLATGDVHYLEPEDEIYREIIVRSLGQGAMINRPIGRGENAQPAPLPKAHFRTTNEMLDEFAFLGEDLARDIVIKNPNEMVERFEDVEVVKTDLYTPFIENSEEKVAEMTYEKAFEIYGNPLPDIIDLRIEKELTSILGNGFAVIYLASQMLVNRSNERGYLVGSRGSVGSSFVATMIGITEVNPMPPHYICPNPDCKHSEFITDGSVGSGYDLPDKICSECGTPYKKDGQDIPFETFLGFDGDKVPDIDLNFSGDDQPSAHLDVRDIFGEEYAFRAGTVGTVADRTAYGFVKGYERDYGKFYRDAEVDRLAQGSAGVKRTTGQHPGGIVVIPNYMDVYDFTPVQYPADDLTAEWQTTHFNFHDIDENVLKLDVLGHDDPTMIRKLQDLSGIDPKTIPADDPEVMKLFSGTEVLGVTEEEIGTPTGMLGIPEFGTNFVRGMVDETHPTTFAELLQLSGLSHGTDVWLGNAQDLIKQGIATLSTVIGCRDDIMVYLMHAGLEPKMAFTIMERVRKGAWLKISEEERNGYISAMRENNVPDWYIESCGKIKYMFPKAHAAAYVLMALRVAYFKVHHPIYYYCAYFSIRAKAFELKTMSAGLDAVKARMADISQKRKINQASNVEIDLFTTLEIVNEMLERGFKFGQLDLYRSDATEFIIDGDTLIPPFVALEGLGENVAKQIVKARNEGEFLSKTELRKRGGLSSTLVEKMSDMGILGSMPEDNQLSLFDDFF.

The Exonuclease domain maps to 425–581; that stretch reads YVVFDVETTG…YDAEATGRLL (157 aa).

This sequence belongs to the DNA polymerase type-C family. PolC subfamily.

The protein localises to the cytoplasm. It catalyses the reaction DNA(n) + a 2'-deoxyribonucleoside 5'-triphosphate = DNA(n+1) + diphosphate. In terms of biological role, required for replicative DNA synthesis. This DNA polymerase also exhibits 3' to 5' exonuclease activity. The polypeptide is DNA polymerase III PolC-type (Streptococcus mutans serotype c (strain ATCC 700610 / UA159)).